The sequence spans 291 residues: 3-hydroxy-5-phosphonooxypentane-2,4-dione thiolase (291 aa).

K203 functions as the Schiff-base intermediate with substrate in the catalytic mechanism.

It belongs to the DeoC/FbaB aldolase family. In terms of assembly, homodecamer.

It localises to the cytoplasm. The enzyme catalyses dihydroxyacetone phosphate + acetyl-CoA = 3-hydroxy-2,4-dioxopentyl phosphate + CoA. Functionally, involved in the degradation of phospho-AI-2, thereby terminating induction of the lsr operon and closing the AI-2 signaling cycle. Catalyzes the transfer of an acetyl moiety from 3-hydroxy-5-phosphonooxypentane-2,4-dione to CoA to form glycerone phosphate and acetyl-CoA. In Photorhabdus laumondii subsp. laumondii (strain DSM 15139 / CIP 105565 / TT01) (Photorhabdus luminescens subsp. laumondii), this protein is 3-hydroxy-5-phosphonooxypentane-2,4-dione thiolase.